Consider the following 415-residue polypeptide: E3 ubiquitin-protein ligase RNF135 (415 aa).

Residues 21–67 form an RING-type zinc finger; the sequence is CIICQGLLDWPTTLPCGHSFCLQCLKDLWVSKRAGVDSCPWACPICR. The stretch at 181–206 forms a coiled coil; sequence TFSASQKKIQEILRDLEKIQETLQGS. Residues 228 to 415 form the B30.2/SPRY domain; that stretch reads PDQRYPVSRK…LTPGNYLEIL (188 aa).

As to quaternary structure, homodimer. Interacts (homodimer) with RIGI (double-stranded RNA-bound oligomeric form); involved in both RIGI ubiquitination, oligomerization into filaments associated with viral RNAs and the bridging of these filaments. Interacts with UBE2D3 and UBE2N; E2 ubiquitin ligases involved in RNF135-mediated ubiquitination of RIGI and activation of the RIG-I signaling pathway. Interacts with PCBP2.

It is found in the cytoplasm. It localises to the stress granule. It catalyses the reaction S-ubiquitinyl-[E2 ubiquitin-conjugating enzyme]-L-cysteine + [acceptor protein]-L-lysine = [E2 ubiquitin-conjugating enzyme]-L-cysteine + N(6)-ubiquitinyl-[acceptor protein]-L-lysine.. Its pathway is protein modification; protein ubiquitination. In terms of biological role, E2-dependent E3 ubiquitin-protein ligase that functions as a RIGI coreceptor in the sensing of viral RNAs in cell cytoplasm and the activation of the antiviral innate immune response. Together with the UBE2D3, UBE2N and UB2V1 E2 ligases, catalyzes the 'Lys-63'-linked polyubiquitination of RIGI oligomerized on viral RNAs, an essential step in the activation of the RIG-I signaling pathway. Through a ubiquitin-independent parallel mechanism, which consists in bridging RIGI filaments forming on longer viral RNAs, further activates the RIG-I signaling pathway. This second mechanism that synergizes with the ubiquitin-dependent one would thereby allow an RNA length-dependent regulation of the RIG-I signaling pathway. Associated with the E2 ligase UBE2N, also constitutively synthesizes unanchored 'Lys-63'-linked polyubiquitin chains that may also activate the RIG-I signaling pathway. In Rattus norvegicus (Rat), this protein is E3 ubiquitin-protein ligase RNF135.